The sequence spans 348 residues: Histidinol-phosphate aminotransferase (348 aa).

K210 is subject to N6-(pyridoxal phosphate)lysine.

Belongs to the class-II pyridoxal-phosphate-dependent aminotransferase family. Histidinol-phosphate aminotransferase subfamily. Homodimer. It depends on pyridoxal 5'-phosphate as a cofactor.

The enzyme catalyses L-histidinol phosphate + 2-oxoglutarate = 3-(imidazol-4-yl)-2-oxopropyl phosphate + L-glutamate. It participates in amino-acid biosynthesis; L-histidine biosynthesis; L-histidine from 5-phospho-alpha-D-ribose 1-diphosphate: step 7/9. The polypeptide is Histidinol-phosphate aminotransferase (Pseudomonas putida (strain W619)).